Here is a 296-residue protein sequence, read N- to C-terminus: Elongation factor Ts (296 aa).

Residues 79–82 (TDFV) are involved in Mg(2+) ion dislocation from EF-Tu.

It belongs to the EF-Ts family.

It is found in the cytoplasm. In terms of biological role, associates with the EF-Tu.GDP complex and induces the exchange of GDP to GTP. It remains bound to the aminoacyl-tRNA.EF-Tu.GTP complex up to the GTP hydrolysis stage on the ribosome. The chain is Elongation factor Ts from Paracoccus denitrificans (strain Pd 1222).